We begin with the raw amino-acid sequence, 103 residues long: Small ribosomal subunit protein uS14c (103 aa).

Residues 34-56 (KVSPLSLSEKTKMREKLQSLPRN) form a disordered region.

The protein belongs to the universal ribosomal protein uS14 family. Part of the 30S ribosomal subunit.

The protein resides in the plastid. Its subcellular location is the chloroplast. In terms of biological role, binds 16S rRNA, required for the assembly of 30S particles. This Triticum aestivum (Wheat) protein is Small ribosomal subunit protein uS14c.